Here is a 63-residue protein sequence, read N- to C-terminus: Large ribosomal subunit protein bL28 (63 aa).

It belongs to the bacterial ribosomal protein bL28 family.

This is Large ribosomal subunit protein bL28 from Acidobacterium capsulatum (strain ATCC 51196 / DSM 11244 / BCRC 80197 / JCM 7670 / NBRC 15755 / NCIMB 13165 / 161).